The primary structure comprises 506 residues: ATP synthase subunit alpha (506 aa).

170 to 177 provides a ligand contact to ATP; the sequence is GDRQTGKT.

This sequence belongs to the ATPase alpha/beta chains family. As to quaternary structure, F-type ATPases have 2 components, CF(1) - the catalytic core - and CF(0) - the membrane proton channel. CF(1) has five subunits: alpha(3), beta(3), gamma(1), delta(1), epsilon(1). CF(0) has four main subunits: a(1), b(1), b'(1) and c(9-12).

It is found in the cellular thylakoid membrane. It catalyses the reaction ATP + H2O + 4 H(+)(in) = ADP + phosphate + 5 H(+)(out). Produces ATP from ADP in the presence of a proton gradient across the membrane. The alpha chain is a regulatory subunit. The chain is ATP synthase subunit alpha from Synechococcus sp. (strain WH7803).